Here is a 39-residue protein sequence, read N- to C-terminus: Large ribosomal subunit protein bL36 (39 aa).

This sequence belongs to the bacterial ribosomal protein bL36 family.

This Lactiplantibacillus plantarum (strain ATCC BAA-793 / NCIMB 8826 / WCFS1) (Lactobacillus plantarum) protein is Large ribosomal subunit protein bL36.